A 226-amino-acid polypeptide reads, in one-letter code: Urease accessory protein UreF (226 aa).

The protein belongs to the UreF family. As to quaternary structure, ureD, UreF and UreG form a complex that acts as a GTP-hydrolysis-dependent molecular chaperone, activating the urease apoprotein by helping to assemble the nickel containing metallocenter of UreC. The UreE protein probably delivers the nickel.

It is found in the cytoplasm. Required for maturation of urease via the functional incorporation of the urease nickel metallocenter. This chain is Urease accessory protein UreF, found in Burkholderia cenocepacia (strain HI2424).